The primary structure comprises 348 residues: Ketol-acid reductoisomerase (NADP(+)) (348 aa).

A KARI N-terminal Rossmann domain is found at 2 to 182; that stretch reads AKTYYDHDAD…GCTRAGVLET (181 aa). Residues 25–28, serine 51, serine 53, and 83–86 each bind NADP(+); these read YGSQ and DTAQ. The active site involves histidine 108. Glycine 134 serves as a coordination point for NADP(+). Positions 183–328 constitute a KARI C-terminal knotted domain; sequence TFKEETETDL…EKLRAAMPFL (146 aa). Mg(2+) is bound by residues aspartate 191, glutamate 195, glutamate 227, and glutamate 231. Serine 252 serves as a coordination point for substrate.

The protein belongs to the ketol-acid reductoisomerase family. It depends on Mg(2+) as a cofactor.

It catalyses the reaction (2R)-2,3-dihydroxy-3-methylbutanoate + NADP(+) = (2S)-2-acetolactate + NADPH + H(+). The enzyme catalyses (2R,3R)-2,3-dihydroxy-3-methylpentanoate + NADP(+) = (S)-2-ethyl-2-hydroxy-3-oxobutanoate + NADPH + H(+). It functions in the pathway amino-acid biosynthesis; L-isoleucine biosynthesis; L-isoleucine from 2-oxobutanoate: step 2/4. Its pathway is amino-acid biosynthesis; L-valine biosynthesis; L-valine from pyruvate: step 2/4. Functionally, involved in the biosynthesis of branched-chain amino acids (BCAA). Catalyzes an alkyl-migration followed by a ketol-acid reduction of (S)-2-acetolactate (S2AL) to yield (R)-2,3-dihydroxy-isovalerate. In the isomerase reaction, S2AL is rearranged via a Mg-dependent methyl migration to produce 3-hydroxy-3-methyl-2-ketobutyrate (HMKB). In the reductase reaction, this 2-ketoacid undergoes a metal-dependent reduction by NADPH to yield (R)-2,3-dihydroxy-isovalerate. In Acidobacterium capsulatum (strain ATCC 51196 / DSM 11244 / BCRC 80197 / JCM 7670 / NBRC 15755 / NCIMB 13165 / 161), this protein is Ketol-acid reductoisomerase (NADP(+)).